The following is a 496-amino-acid chain: MAGEITETGELYSSYVGLVYMFNLIVGTGALTMPKAFATAGWLVSLVLLVFLGFMSFVTTTFVIEAMAAANAQLRWKRMENLKEEEDDDSSTASDSDVLIRDNYERAEKRPILSVQRRGSPNPFEITDRVEMGQMASMFFNKVGVNLFYFCIIVYLYGDLAIYAAAVPFSLMQVTCSATGNDSCGVEADTKYNDTDRCWGPLRRVDAYRIYLAIFTLLLGPFTFFDVQKTKYLQILTSLMRWIAFAVMIVLALVRIGHRQGEGHPPLADFSGVRNLFGVCVYSFMCQHSLPSLITPVSSKRHLTRLVFLDYVLILAFYGLLSFTAIFCFRGDSLMDMYTLNFARCDIVGLAAVRFFLGLFPVFTISTNFPIIAVTLRNNWKTLFHREGGTYPWVVDRVVFPTITLVPPVLVAFCTHDLESLVGITGAYAGTGIQYVIPAFLVYHCRRDTQLAFGCGVGNKHRSPFRHTFWVGFVLLWAFSCFIFVTANIVLSETKL.

Over 1-10 the chain is Cytoplasmic; sequence MAGEITETGE. The helical transmembrane segment at 11–31 threads the bilayer; sequence LYSSYVGLVYMFNLIVGTGAL. Residues 32–36 lie on the Extracellular side of the membrane; it reads TMPKA. Residues 37–57 form a helical membrane-spanning segment; it reads FATAGWLVSLVLLVFLGFMSF. Topologically, residues 58 to 146 are cytoplasmic; that stretch reads VTTTFVIEAM…SMFFNKVGVN (89 aa). Residues 147 to 167 form a helical membrane-spanning segment; sequence LFYFCIIVYLYGDLAIYAAAV. Over 168–204 the chain is Extracellular; it reads PFSLMQVTCSATGNDSCGVEADTKYNDTDRCWGPLRR. An N-linked (GlcNAc...) asparagine glycan is attached at N193. The helical transmembrane segment at 205–225 threads the bilayer; the sequence is VDAYRIYLAIFTLLLGPFTFF. The Cytoplasmic portion of the chain corresponds to 226–233; sequence DVQKTKYL. A helical transmembrane segment spans residues 234 to 254; it reads QILTSLMRWIAFAVMIVLALV. Over 255–276 the chain is Extracellular; sequence RIGHRQGEGHPPLADFSGVRNL. A helical transmembrane segment spans residues 277 to 297; the sequence is FGVCVYSFMCQHSLPSLITPV. The Cytoplasmic segment spans residues 298 to 306; it reads SSKRHLTRL. The helical transmembrane segment at 307-327 threads the bilayer; that stretch reads VFLDYVLILAFYGLLSFTAIF. Residues 328–354 lie on the Extracellular side of the membrane; that stretch reads CFRGDSLMDMYTLNFARCDIVGLAAVR. Residues 355 to 375 traverse the membrane as a helical segment; the sequence is FFLGLFPVFTISTNFPIIAVT. The Cytoplasmic segment spans residues 376 to 397; that stretch reads LRNNWKTLFHREGGTYPWVVDR. A helical membrane pass occupies residues 398-418; that stretch reads VVFPTITLVPPVLVAFCTHDL. Residues 419 to 421 are Extracellular-facing; that stretch reads ESL. A helical membrane pass occupies residues 422-442; the sequence is VGITGAYAGTGIQYVIPAFLV. At 443–470 the chain is on the cytoplasmic side; it reads YHCRRDTQLAFGCGVGNKHRSPFRHTFW. A helical membrane pass occupies residues 471–491; it reads VGFVLLWAFSCFIFVTANIVL. Over 492-496 the chain is Extracellular; sequence SETKL.

This sequence belongs to the TMEM104 family.

The protein resides in the membrane. The protein is Transmembrane protein 104 (TMEM104) of Pongo abelii (Sumatran orangutan).